The sequence spans 85 residues: Large ribosomal subunit protein bL27 (85 aa).

A disordered region spans residues 1–21; the sequence is MAHKKAGGSTRNGRDSEGKRL.

Belongs to the bacterial ribosomal protein bL27 family.

The protein is Large ribosomal subunit protein bL27 of Hamiltonella defensa subsp. Acyrthosiphon pisum (strain 5AT).